The following is a 602-amino-acid chain: UvrABC system protein C (602 aa).

Residues 17–94 enclose the GIY-YIG domain; it reads KTSGCYKMYS…IKKYKPTYNI (78 aa). In terms of domain architecture, UVR spans 199 to 234; it reads SKLLNDIEIKMKEVIMKENFEAAIKLKETKKSLIEI.

It belongs to the UvrC family. As to quaternary structure, interacts with UvrB in an incision complex.

It is found in the cytoplasm. Its function is as follows. The UvrABC repair system catalyzes the recognition and processing of DNA lesions. UvrC both incises the 5' and 3' sides of the lesion. The N-terminal half is responsible for the 3' incision and the C-terminal half is responsible for the 5' incision. The protein is UvrABC system protein C of Borrelia recurrentis (strain A1).